A 158-amino-acid chain; its full sequence is MKCPFCGSLDTQVIDSRANEAGDAIRRRRRCAACDKRFTTWETAELRPPQIVKTNGTREDFSETKLREGFRRALHKRPVSTELVDAAVDRIRQRLLTLGEREVPAREVGELVMTELKKLDKIAYIRFASVYKSFKDPDDFRDVLEDLAQGPQAGDDPA.

The segment at 3–34 is a zinc-finger region; sequence CPFCGSLDTQVIDSRANEAGDAIRRRRRCAAC. Positions 49–139 constitute an ATP-cone domain; that stretch reads PQIVKTNGTR…VYKSFKDPDD (91 aa).

The protein belongs to the NrdR family. Zn(2+) is required as a cofactor.

In terms of biological role, negatively regulates transcription of bacterial ribonucleotide reductase nrd genes and operons by binding to NrdR-boxes. This Thiobacillus denitrificans (strain ATCC 25259 / T1) protein is Transcriptional repressor NrdR.